A 429-amino-acid polypeptide reads, in one-letter code: Histidine--tRNA ligase (429 aa).

This sequence belongs to the class-II aminoacyl-tRNA synthetase family. Homodimer.

It is found in the cytoplasm. It carries out the reaction tRNA(His) + L-histidine + ATP = L-histidyl-tRNA(His) + AMP + diphosphate + H(+). This is Histidine--tRNA ligase from Streptococcus pneumoniae (strain CGSP14).